The primary structure comprises 353 residues: Aliphatic aldoxime dehydratase (353 aa).

An an aliphatic aldoxime-binding site is contributed by S219. Position 299 (H299) interacts with heme b. An aliphatic aldoxime is bound at residue H320. Residue H320 is part of the active site.

It belongs to the heme-containing dehydratase family. In terms of assembly, homodimer. Requires heme b as cofactor.

It carries out the reaction an aliphatic aldoxime = a nitrile + H2O. Its activity is regulated as follows. Active when the heme iron is in the ferrous state. The activity is enhanced by reducing agents, such as Na(2)S, Na(2)S(2)(O4), 2-mercaptoethanol, and L-cysteine and supplementary additions of electron acceptors such as flavins, sulfite ion, and vitamin K3. The effect of various chemicals on the enzyme activity is different in the presence and absence of the reducing reagent, Na(2)S, which acts not only as a reductant but also changes the substrate specificity of the enzyme. Catalyzes the dehydration of aldoximes to their corresponding nitrile. Is active toward various arylalkyl- and alkyl-aldoximes, and to a lesser extent toward aryl-aldoximes. The sequence is that of Aliphatic aldoxime dehydratase from Rhodococcus erythropolis (Arthrobacter picolinophilus).